The chain runs to 208 residues: Large ribosomal subunit protein uL3 (208 aa).

Gln149 is modified (N5-methylglutamine).

This sequence belongs to the universal ribosomal protein uL3 family. As to quaternary structure, part of the 50S ribosomal subunit. Forms a cluster with proteins L14 and L19. In terms of processing, methylated by PrmB.

In terms of biological role, one of the primary rRNA binding proteins, it binds directly near the 3'-end of the 23S rRNA, where it nucleates assembly of the 50S subunit. The polypeptide is Large ribosomal subunit protein uL3 (Actinobacillus succinogenes (strain ATCC 55618 / DSM 22257 / CCUG 43843 / 130Z)).